The primary structure comprises 356 residues: Probable cytosolic iron-sulfur protein assembly protein 1 (356 aa).

WD repeat units lie at residues Gly-34–Glu-73, Gly-89–Cys-128, Glu-134–Cys-173, Ala-179–Glu-218, His-244–Arg-291, and Ala-319–Thr-356.

The protein belongs to the WD repeat CIA1 family.

In terms of biological role, essential component of the cytosolic iron-sulfur (Fe/S) protein assembly machinery. Required for the maturation of extramitochondrial Fe/S proteins. The chain is Probable cytosolic iron-sulfur protein assembly protein 1 from Malassezia globosa (strain ATCC MYA-4612 / CBS 7966) (Dandruff-associated fungus).